The chain runs to 91 residues: Small ribosomal subunit protein uS19 (91 aa).

It belongs to the universal ribosomal protein uS19 family.

In terms of biological role, protein S19 forms a complex with S13 that binds strongly to the 16S ribosomal RNA. The protein is Small ribosomal subunit protein uS19 of Alcanivorax borkumensis (strain ATCC 700651 / DSM 11573 / NCIMB 13689 / SK2).